Consider the following 276-residue polypeptide: Rhomboid protease GlpG (276 aa).

6 consecutive transmembrane segments (helical) span residues 94-114 (GPVT…MQIL), 142-162 (ALMH…WYLG), 169-189 (LGSG…GYVQ), 192-212 (FSGP…GYVW), 229-249 (LIIF…GMSM), and 250-270 (ANGA…VDSL). Ser201 acts as the Nucleophile in catalysis. Residue His254 is part of the active site.

It belongs to the peptidase S54 family.

It is found in the cell inner membrane. The enzyme catalyses Cleaves type-1 transmembrane domains using a catalytic dyad composed of serine and histidine that are contributed by different transmembrane domains.. Its function is as follows. Rhomboid-type serine protease that catalyzes intramembrane proteolysis. The protein is Rhomboid protease GlpG of Escherichia fergusonii (strain ATCC 35469 / DSM 13698 / CCUG 18766 / IAM 14443 / JCM 21226 / LMG 7866 / NBRC 102419 / NCTC 12128 / CDC 0568-73).